A 370-amino-acid chain; its full sequence is Probable trehalose-phosphate phosphatase J (370 aa).

This sequence belongs to the trehalose phosphatase family. Requires a divalent metal cation as cofactor.

The enzyme catalyses alpha,alpha-trehalose 6-phosphate + H2O = alpha,alpha-trehalose + phosphate. It participates in glycan biosynthesis; trehalose biosynthesis. Removes the phosphate from trehalose 6-phosphate to produce free trehalose. Trehalose accumulation in plant may improve abiotic stress tolerance. This chain is Probable trehalose-phosphate phosphatase J (TPPJ), found in Arabidopsis thaliana (Mouse-ear cress).